We begin with the raw amino-acid sequence, 82 residues long: UPF0180 protein BH2667 (82 aa).

Belongs to the UPF0180 family.

The polypeptide is UPF0180 protein BH2667 (Halalkalibacterium halodurans (strain ATCC BAA-125 / DSM 18197 / FERM 7344 / JCM 9153 / C-125) (Bacillus halodurans)).